The primary structure comprises 210 residues: MKINTAEFIVSNSDAAKCPKDFLPEYAFIGRSNVGKSSLINMITNHKNLAKTSGKPGKTQLINHFKINNNWFLVDLPGYGYAKVSKKTKSIFQQFITDYFENREQLVCAFVLIDIRHEAQKIDIEFMSYMGESEIPFCIIFTKADKISKGKIDSHIAAYRKQMYANNWAEMPQYFVTSSTESIGKDELLTYIDEVNQEVFKNNSGFLNSI.

The EngB-type G domain occupies 22–198 (FLPEYAFIGR…LTYIDEVNQE (177 aa)). Residues 30–37 (GRSNVGKS), 57–61 (GKTQL), 75–78 (DLPG), 142–145 (TKAD), and 177–179 (TSS) contribute to the GTP site. The Mg(2+) site is built by Ser37 and Thr59.

This sequence belongs to the TRAFAC class TrmE-Era-EngA-EngB-Septin-like GTPase superfamily. EngB GTPase family. Mg(2+) is required as a cofactor.

In terms of biological role, necessary for normal cell division and for the maintenance of normal septation. This chain is Probable GTP-binding protein EngB, found in Flavobacterium johnsoniae (strain ATCC 17061 / DSM 2064 / JCM 8514 / BCRC 14874 / CCUG 350202 / NBRC 14942 / NCIMB 11054 / UW101) (Cytophaga johnsonae).